The primary structure comprises 576 residues: MSQKSQFAYRSSKSIGLVNASENYASPPKFEAISEPARNACYSPNGKLFAYATATQVVINDTESGAKLTQLPAANTYELGFSPLGKYLSTWERPGKEADGTPKQNMKVWNTETGQLVFSFVQRNQTGWNLQYTCDESLAARLVTNEVHFYETGNMSKGPIAKLRVEGISDFALSPGQNHAVAVFIPEKKGAPASVRTYSIPNFNSPLSQKTFFKADKVQFKWNALGTSLLVLTQTEVDKSNKNYYGETNLYLLGITGQFDCRVDLDREGPIHDVCWNADSKEFGIVYGYMPAKTAIFDNRANVVSIIPPAPRNTLIFSPNSRYILLAGFGNLQGSIDIFDAANNMKKITTVEAANCTYCEFSPDSQFLLTAVTSPRLRVDNSIKIWHITGAPMFYEEFNELYQAFWRPRPLNPTLLQNALTSASLPSPPTPHASASKLAAKPSVKPAGAYRPPGARGQNSTFSYRREEIDVMSSGSANKHVNSSRQRVVPGATPVIDGNKKNNKKTKPAVKQVAQPTAEVSDEKKIRSLCKKLRAIDDLKSRLNNNEKLEATQVKKIESEGKVLAELKALGWTPDA.

WD repeat units follow at residues 71-119, 266-307, 308-349, and 351-396; these read LPAA…LVFS, DREG…VSII, PPAP…KKIT, and VEAA…MFYE. Disordered stretches follow at residues 422–461 and 475–505; these read SASL…QNST and GSAN…NNKK. A compositionally biased stretch (polar residues) spans 475-486; it reads GSANKHVNSSRQ.

This sequence belongs to the WD repeat EIF2A family.

It is found in the cytoplasm. Its function is as follows. Functions in the early steps of protein synthesis of a small number of specific mRNAs. Acts by directing the binding of methionyl-tRNAi to 40S ribosomal subunits. In contrast to the eIF-2 complex, it binds methionyl-tRNAi to 40S subunits in a codon-dependent manner, whereas the eIF-2 complex binds methionyl-tRNAi to 40S subunits in a GTP-dependent manner. The chain is Eukaryotic translation initiation factor 2A from Schizosaccharomyces pombe (strain 972 / ATCC 24843) (Fission yeast).